Reading from the N-terminus, the 160-residue chain is Phosphopantetheine adenylyltransferase (160 aa).

T10 lines the substrate pocket. ATP-binding positions include T10–F11 and H18. Positions 42, 74, and 88 each coordinate substrate. ATP contacts are provided by residues G89–R91, E99, and N124–T130.

The protein belongs to the bacterial CoaD family. As to quaternary structure, homohexamer. The cofactor is Mg(2+).

It localises to the cytoplasm. The enzyme catalyses (R)-4'-phosphopantetheine + ATP + H(+) = 3'-dephospho-CoA + diphosphate. Its pathway is cofactor biosynthesis; coenzyme A biosynthesis; CoA from (R)-pantothenate: step 4/5. In terms of biological role, reversibly transfers an adenylyl group from ATP to 4'-phosphopantetheine, yielding dephospho-CoA (dPCoA) and pyrophosphate. This chain is Phosphopantetheine adenylyltransferase, found in Pseudoalteromonas atlantica (strain T6c / ATCC BAA-1087).